The sequence spans 282 residues: Exo-glucosaminidase LytG (282 aa).

The N-terminal stretch at 1 to 29 (MARKKLKKRKLLISLFFLVSIPLALFVLA) is a signal peptide. One can recognise a GW domain in the interval 203–281 (SLKSVDLNAS…DDSAVEIKEA (79 aa)).

This sequence belongs to the glycosyl hydrolase 73 family. Mg(2+) is required as a cofactor.

It localises to the secreted. It is found in the cell wall. Its activity is regulated as follows. Inhibited by EDTA. Functionally, is the major glucosaminidase responsible for peptidoglycan structural determination during vegetative growth. Catalyzes the hydrolysis of 1,4-beta-linkages between N-acetyl-D-glucosamine and N-acetylmuramic acid residues in peptidoglycan. Acts processively from the ends of the glycan strands. Also plays a role in motility, chemotaxis and cell division. The sequence is that of Exo-glucosaminidase LytG (lytG) from Bacillus subtilis (strain 168).